Reading from the N-terminus, the 208-residue chain is MSKVLFVKANDRPAEQAVSSKMYETFVTTYKEANPNTEITELDLFALDLPYYGNIAISGGYKRSQGMELTAEEEKAVATVDQYLNQFLEADKVVFAFPLWNFTVPAPLITYISYLSQAGKTFKYTANGPEGLAGGKKVVVLGARGSDYSSEQMAPMEMAVNYVTTVLGFWGITNPETVVIEGHNQYPDRSQQIVEEGLENVKKVAAKF.

It belongs to the azoreductase type 1 family. Homodimer. FMN is required as a cofactor.

The enzyme catalyses 2 a quinone + NADH + H(+) = 2 a 1,4-benzosemiquinone + NAD(+). It carries out the reaction N,N-dimethyl-1,4-phenylenediamine + anthranilate + 2 NAD(+) = 2-(4-dimethylaminophenyl)diazenylbenzoate + 2 NADH + 2 H(+). Its function is as follows. Quinone reductase that provides resistance to thiol-specific stress caused by electrophilic quinones. Also exhibits azoreductase activity. Catalyzes the reductive cleavage of the azo bond in aromatic azo compounds to the corresponding amines. The protein is FMN-dependent NADH:quinone oxidoreductase 2 of Bacillus anthracis.